The following is a 248-amino-acid chain: 4-hydroxy-tetrahydrodipicolinate reductase (248 aa).

Aspartate 28 provides a ligand contact to NAD(+). An NADP(+)-binding site is contributed by lysine 29. NAD(+)-binding positions include 78–80 (ATT) and 102–105 (SYNM). The active-site Proton donor/acceptor is the histidine 134. Residue histidine 135 coordinates (S)-2,3,4,5-tetrahydrodipicolinate. Catalysis depends on lysine 138, which acts as the Proton donor. 144-145 (GT) contacts (S)-2,3,4,5-tetrahydrodipicolinate.

This sequence belongs to the DapB family.

Its subcellular location is the cytoplasm. The enzyme catalyses (S)-2,3,4,5-tetrahydrodipicolinate + NAD(+) + H2O = (2S,4S)-4-hydroxy-2,3,4,5-tetrahydrodipicolinate + NADH + H(+). The catalysed reaction is (S)-2,3,4,5-tetrahydrodipicolinate + NADP(+) + H2O = (2S,4S)-4-hydroxy-2,3,4,5-tetrahydrodipicolinate + NADPH + H(+). Its pathway is amino-acid biosynthesis; L-lysine biosynthesis via DAP pathway; (S)-tetrahydrodipicolinate from L-aspartate: step 4/4. Catalyzes the conversion of 4-hydroxy-tetrahydrodipicolinate (HTPA) to tetrahydrodipicolinate. This Exiguobacterium sibiricum (strain DSM 17290 / CCUG 55495 / CIP 109462 / JCM 13490 / 255-15) protein is 4-hydroxy-tetrahydrodipicolinate reductase.